The following is a 550-amino-acid chain: Arginine--tRNA ligase (550 aa).

The 'HIGH' region motif lies at 130–140 (ANPTGPIHIGG).

It belongs to the class-I aminoacyl-tRNA synthetase family. In terms of assembly, monomer.

It is found in the cytoplasm. The catalysed reaction is tRNA(Arg) + L-arginine + ATP = L-arginyl-tRNA(Arg) + AMP + diphosphate. This Mycobacterium tuberculosis (strain CDC 1551 / Oshkosh) protein is Arginine--tRNA ligase (argS).